A 233-amino-acid polypeptide reads, in one-letter code: Adenosine 5'-phosphosulfate reductase (233 aa).

Residues C120, C121, C203, and C206 each contribute to the [4Fe-4S] cluster site. The active-site Nucleophile; cysteine thiosulfonate intermediate is the C229.

It belongs to the PAPS reductase family. CysH subfamily. It depends on [4Fe-4S] cluster as a cofactor.

The protein localises to the cytoplasm. The catalysed reaction is [thioredoxin]-disulfide + sulfite + AMP + 2 H(+) = adenosine 5'-phosphosulfate + [thioredoxin]-dithiol. It functions in the pathway sulfur metabolism; hydrogen sulfide biosynthesis; sulfite from sulfate. Functionally, catalyzes the formation of sulfite from adenosine 5'-phosphosulfate (APS) using thioredoxin as an electron donor. This chain is Adenosine 5'-phosphosulfate reductase, found in Lysinibacillus sphaericus (strain C3-41).